The primary structure comprises 412 residues: uncharacterized protein (412 aa).

Residues 6-64 (ELAKGDIISVEVLRPAHGGEGIGHHDGRVIFVKGGIPGDVVDVEIAQLKKKWARGEVVK) form the TRAM domain. S-adenosyl-L-methionine-binding residues include Q242, Y278, E300, and D341. The active-site Nucleophile is the C368.

This sequence belongs to the class I-like SAM-binding methyltransferase superfamily. RNA M5U methyltransferase family.

This is an uncharacterized protein from Corynebacterium glutamicum (strain ATCC 13032 / DSM 20300 / JCM 1318 / BCRC 11384 / CCUG 27702 / LMG 3730 / NBRC 12168 / NCIMB 10025 / NRRL B-2784 / 534).